The sequence spans 2020 residues: Metacaspase-2 (2020 aa).

Basic and acidic residues-rich tracts occupy residues Ser-51 to Gln-60 and Asp-69 to Lys-78. Disordered regions lie at residues Ser-51–Lys-78 and Arg-573–Asn-614. Over residues Asn-576–Asn-614 the composition is skewed to low complexity.

The protein belongs to the peptidase C14B family.

The protein localises to the cytoplasm. Its activity is regulated as follows. Ca(2+) does not appear to affect catalytic activity. Functionally, protease that cleaves specifically after arginine or lysine residues. May play a role in parasite growth and/or development. This Plasmodium falciparum (isolate 3D7) protein is Metacaspase-2.